Consider the following 164-residue polypeptide: UPF0304 protein ECA3037 (164 aa).

This sequence belongs to the UPF0304 family.

This chain is UPF0304 protein ECA3037, found in Pectobacterium atrosepticum (strain SCRI 1043 / ATCC BAA-672) (Erwinia carotovora subsp. atroseptica).